The following is a 542-amino-acid chain: Esterase 6 (542 aa).

Residues 1-19 form the signal peptide; it reads MNYVGLIIVLSCLWLGSNA. An N-linked (GlcNAc...) asparagine glycan is attached at N40. A disulfide bond links C84 and C103. The active-site Acyl-ester intermediate is the S207. The cysteines at positions 259 and 271 are disulfide-linked. N-linked (GlcNAc...) asparagine glycosylation is found at N418 and N454. The active-site Charge relay system is H464. The cysteines at positions 512 and 533 are disulfide-linked.

This sequence belongs to the type-B carboxylesterase/lipase family. In terms of assembly, monomer.

Its subcellular location is the secreted. The catalysed reaction is a carboxylic ester + H2O = an alcohol + a carboxylate + H(+). Transferred from the ejaculatory bulbs of males to the female genitals upon copulation, plays an important role in the reproductive biology. The chain is Esterase 6 (Est-6) from Drosophila simulans (Fruit fly).